Consider the following 90-residue polypeptide: Putative Fis-like DNA-binding protein (90 aa).

The segment at residues 66–85 is a DNA-binding region (H-T-H motif); the sequence is QSRAAALLGIHRATLRKKLK.

The protein belongs to the transcriptional regulatory Fis family.

The chain is Putative Fis-like DNA-binding protein from Xylella fastidiosa (strain Temecula1 / ATCC 700964).